The chain runs to 458 residues: Elongation factor 1-alpha (458 aa).

G2 carries the post-translational modification N,N,N-trimethylglycine; by EFM7. Position 3 is an N6,N6-dimethyllysine; by EFM7; alternate (K3). K3 carries the N6-methyllysine; by EFM7; alternate modification. One can recognise a tr-type G domain in the interval K5 to T240. The tract at residues G14–S21 is G1. Position 18 is a phosphoserine (S18). GTP-binding residues include S21 and T22. K30 carries the N6-methyllysine; by EFM1 modification. Residues G70–D74 form a G2 region. Phosphothreonine is present on T72. K79 is modified (N6,N6,N6-trimethyllysine; by EFM5). A Phosphothreonine modification is found at T82. The segment at D91–G94 is G3. GTP contacts are provided by N153, K154, and D156. The interval N153 to D156 is G4. S163 bears the Phosphoserine mark. 3 residues coordinate GTP: S192, G193, and W194. A G5 region spans residues S192 to W194. Glycyl lysine isopeptide (Lys-Gly) (interchain with G-Cter in ubiquitin) cross-links involve residues K224, K242, and K253. At T259 the chain carries Phosphothreonine. A Glycyl lysine isopeptide (Lys-Gly) (interchain with G-Cter in ubiquitin) cross-link involves residue K271. S289 is subject to Phosphoserine. K316 is modified (N6,N6-dimethyllysine; by EFM4; alternate). The residue at position 316 (K316) is an N6-methyllysine; by EFM4; alternate. K390 carries the post-translational modification N6-methyllysine; by EFM6. K393 participates in a covalent cross-link: Glycyl lysine isopeptide (Lys-Gly) (interchain with G-Cter in ubiquitin). S414 is subject to Phosphoserine. Phosphothreonine is present on T430. A Glycyl lysine isopeptide (Lys-Gly) (interchain with G-Cter in ubiquitin) cross-link involves residue K437. K458 bears the Lysine methyl ester mark.

This sequence belongs to the TRAFAC class translation factor GTPase superfamily. Classic translation factor GTPase family. EF-Tu/EF-1A subfamily. The eukaryotic elongation factor 1 complex (eEF1) is probably a heterohexamer. Two trimeric complexes, each composed of eEF1A (TEF1 or TEF2), eEF1Balpha (EFB1) and eEF1Bgamma (CAM1 or TEF4), are probably dimerized via the eF1Bgamma subunits. Interacts with eEF1Balpha; the interaction is direct. Interacts with GCN2 (via C-terminus); this interaction is direct, occurs in amino acid-repleted cells, may be stabilized in a ribosome-dependent manner, reduces GCN2-mediated eIF-2-alpha phosphorylation and is lost in amino acid-starved cells and by uncharged tRNAs. Interacts with CEX1. Interacts with elongation factor 3 (YEF3 or HEF3). Interacts with NAP1. Interacts with SRV2. Interacts with chaperone ZPR1; the interaction is required for its proper folding. Binds to actin and forms a ternary complex with BNI1 and profilin. Interacts with the proteasome, probably via RPT1. Associates with ribosomes. In terms of processing, S-thiolated in response to oxidative stress, probably inhibiting the protein and causing a reduction in protein synthesis. Post-translationally, glutaminylated at Glu-45. An L-glutamine is linked to Glu-45 via the alpha amino group. This glutaminylation is yeast-specific and not essential for the normal functions of eEF1A. However, eEF1A glutaminylation slightly reduced growth under antibiotic-induced translational stress conditions.

It is found in the cytoplasm. It localises to the cytoskeleton. The protein operates within protein biosynthesis; polypeptide chain elongation. With respect to regulation, inhibited by narciclasine. Its function is as follows. GTP-binding component of the eukaryotic elongation factor 1 complex (eEF1). In its active GTP-bound form, binds to and delivers aminoacyl-tRNA to the A-site of ribosomes during protein biosynthesis. In the presence of a correct codon-anticodon match between the aminoacyl-tRNA and the A-site codon of the ribosome-bound mRNA, the ribosome acts as a GTPase activator and the GTP is hydrolyzed. The inactive GDP-bound form leaves the ribosome and must be recycled by its guanine nucleotide exchange factor (GEF) (eEF1B subcomplex) before binding another molecule of aminoacyl-tRNA. Required for nuclear export of aminoacyl-tRNAs. May also be involved in translational quality control by targeting cotranslationally damaged proteins to the proteasome. Also exhibits actin filament-binding and -bundling activities and is involved in cytoskeleton organization. Plays a role as a negative regulator of GCN2 kinase activity by inhibiting GCN2-mediated eIF-2-alpha phosphorylation in amino acid-repleted cells. In Saccharomyces cerevisiae (strain ATCC 204508 / S288c) (Baker's yeast), this protein is Elongation factor 1-alpha (TEF1).